The following is a 577-amino-acid chain: Outer spore wall assembly protein SHE10 (577 aa).

Positions 1-23 (MGKLIKLITTLTVLVSLLQYCCE) are cleaved as a signal peptide. Coiled-coil stretches lie at residues 379–416 (NETRSTLDELTNAMEKDLSEITDEIEKKVNAIREENVE) and 513–561 (ILRS…EEDV). The segment covering 525-545 (RERKERERKEREKAAAEEFQR) has biased composition (basic and acidic residues). Residues 525–577 (RERKERERKEREKAAAEEFQRQQELLLQQEEEDEEDVSYTSTSTITTTTTMTL) are disordered. Residues 562–577 (SYTSTSTITTTTTMTL) show a composition bias toward low complexity.

It belongs to the SHE10 family. As to quaternary structure, component of the mitochondria-localized RNase mitochondrial RNA-processing (RNase MRP) composed of one single RNA encoded by the NME1 gene and at least 31 proteins. Absent in the nucleus-localized RNase MRP (NuMRP).

Its subcellular location is the mitochondrion. Its function is as follows. Involved in spore wall assembly. May be a component of the mitochondrial RNase MRP (MtMRP), a ribonucleoprotein endoribonuclease involved in the cleaving RNA transcripts to generate primers for DNA replication in mitochondria. The polypeptide is Outer spore wall assembly protein SHE10 (Saccharomyces cerevisiae (strain JAY291) (Baker's yeast)).